Consider the following 201-residue polypeptide: Small ribosomal subunit protein uS4c (201 aa).

Positions 89 to 152 (MRLDNILFRL…NSRTLVQNLL (64 aa)) constitute an S4 RNA-binding domain.

The protein belongs to the universal ribosomal protein uS4 family. As to quaternary structure, part of the 30S ribosomal subunit. Contacts protein S5. The interaction surface between S4 and S5 is involved in control of translational fidelity.

It is found in the plastid. Its subcellular location is the chloroplast. Its function is as follows. One of the primary rRNA binding proteins, it binds directly to 16S rRNA where it nucleates assembly of the body of the 30S subunit. In terms of biological role, with S5 and S12 plays an important role in translational accuracy. In Capsella bursa-pastoris (Shepherd's purse), this protein is Small ribosomal subunit protein uS4c (rps4).